The sequence spans 91 residues: Cell division topological specificity factor (91 aa).

This sequence belongs to the MinE family.

Prevents the cell division inhibition by proteins MinC and MinD at internal division sites while permitting inhibition at polar sites. This ensures cell division at the proper site by restricting the formation of a division septum at the midpoint of the long axis of the cell. This Erwinia tasmaniensis (strain DSM 17950 / CFBP 7177 / CIP 109463 / NCPPB 4357 / Et1/99) protein is Cell division topological specificity factor.